The following is a 176-amino-acid chain: 4-hydroxylaminobenzoate lyase (176 aa).

The protein belongs to the PnbB family.

It catalyses the reaction 4-hydroxylaminobenzoate + H2O + H(+) = 3,4-dihydroxybenzoate + NH4(+). Functionally, lyase involved in the degradation of nitroaromatic compounds. Catalyzes the conversion of 4-hydroxylaminobenzoate to 3,4-dihydroxybenzoate (protocatechuate). Required for the catabolism of 4-nitrotoluene. The protein is 4-hydroxylaminobenzoate lyase of Pseudomonas putida (Arthrobacter siderocapsulatus).